The chain runs to 338 residues: Phenylalanine--tRNA ligase alpha subunit (338 aa).

Residue E252 coordinates Mg(2+).

Belongs to the class-II aminoacyl-tRNA synthetase family. Phe-tRNA synthetase alpha subunit type 1 subfamily. In terms of assembly, tetramer of two alpha and two beta subunits. Mg(2+) is required as a cofactor.

The protein localises to the cytoplasm. The enzyme catalyses tRNA(Phe) + L-phenylalanine + ATP = L-phenylalanyl-tRNA(Phe) + AMP + diphosphate + H(+). This is Phenylalanine--tRNA ligase alpha subunit from Pseudomonas paraeruginosa (strain DSM 24068 / PA7) (Pseudomonas aeruginosa (strain PA7)).